We begin with the raw amino-acid sequence, 250 residues long: mRNA-decapping protein g5R (250 aa).

The Nudix hydrolase domain occupies 97–239 (QKFRKNWLLP…NLEPMIGPAF (143 aa)). A Nudix box motif is present at residues 132–153 (GKPKEDESDLTCAIREFEEETG). Glu-138 lines the Mg(2+) pocket. The active-site Nucleophile is the Glu-147. Mg(2+) contacts are provided by Glu-151 and Asp-173.

Belongs to the Nudix hydrolase family. DIPP subfamily. In terms of assembly, interacts with host RPL23A. Mg(2+) serves as cofactor. The cofactor is Mn(2+).

It localises to the host rough endoplasmic reticulum. It catalyses the reaction diphospho-myo-inositol polyphosphate + H2O = myo-inositol polyphosphate + phosphate.. Functionally, decapping enzyme required for the removal of the 5'-end m7GpppN cap tethered to viral and host mRNAs to allow their decay in cells. May therefore accelerate viral and cellular mRNA turnover to eliminate competing host mRNAs and allow stage-specific synthesis of viral proteins. Acceleration of the turnover of cellular transcripts may even promote the shutoff of host protein synthesis. In addition to the mRNA cap, g5R also efficiently hydrolyzes diphosphoinositol polyphosphates. Down-regulation of the level of PP-InsP5 (diphosphoinositol pentakisphosphate) may play a role in viral manipulation of the cellular secretory pathway, a step necessary for the formation of virions. Binds viral and cellular poly(A) mRNAs, thereby decreasing both types of mRNAs. The polypeptide is mRNA-decapping protein g5R (Ornithodoros (relapsing fever ticks)).